The following is a 144-amino-acid chain: Large ribosomal subunit protein uL15 (144 aa).

Residues 1–54 (MRLNTLSPAEGSKKAGKRLGRGIGSGLGKTGGRGHKGQNSRSGGGVRRGFEGGQ) form a disordered region. The segment covering 21-31 (RGIGSGLGKTG) has biased composition (gly residues).

Belongs to the universal ribosomal protein uL15 family. Part of the 50S ribosomal subunit.

Its function is as follows. Binds to the 23S rRNA. The polypeptide is Large ribosomal subunit protein uL15 (Enterobacter sp. (strain 638)).